The sequence spans 449 residues: Adenylosuccinate synthetase (449 aa).

GTP is bound by residues 12–18 (GDEGKGK) and 40–42 (GHT). Asp-13 serves as the catalytic Proton acceptor. Mg(2+) is bound by residues Asp-13 and Gly-40. IMP-binding positions include 13 to 16 (DEGK), 38 to 41 (NAGH), Thr-128, Arg-142, Gln-223, Thr-238, and Arg-302. His-41 (proton donor) is an active-site residue. 298 to 304 (TTTGRQR) serves as a coordination point for substrate. Residues Arg-304, 330-332 (KLD), and 412-414 (SLG) each bind GTP.

Belongs to the adenylosuccinate synthetase family. In terms of assembly, homodimer. It depends on Mg(2+) as a cofactor.

The protein resides in the cytoplasm. It catalyses the reaction IMP + L-aspartate + GTP = N(6)-(1,2-dicarboxyethyl)-AMP + GDP + phosphate + 2 H(+). Its pathway is purine metabolism; AMP biosynthesis via de novo pathway; AMP from IMP: step 1/2. Plays an important role in the de novo pathway of purine nucleotide biosynthesis. Catalyzes the first committed step in the biosynthesis of AMP from IMP. The chain is Adenylosuccinate synthetase from Synechococcus sp. (strain JA-2-3B'a(2-13)) (Cyanobacteria bacterium Yellowstone B-Prime).